Here is a 349-residue protein sequence, read N- to C-terminus: NADH-quinone oxidoreductase subunit H (349 aa).

The next 8 membrane-spanning stretches (helical) occupy residues 11–31 (FPLLIIVGKTLLLLVILLLLV), 83–103 (GVFLLAPFVSATLALSTWAVI), 116–136 (VGLLYILAISSLEVYGVIMGG), 162–182 (IGFVLVTVILVSGSLDLTTIV), 200–220 (FLDWNWLVLFPMFIIFFISAL), 252–272 (LFFLGEYVAIVLMCALTTILF), 288–308 (VPGIIWFVLKVCFVFFWFAMV), and 323–343 (LGWKVFLPLSLAMVVITAAFL).

The protein belongs to the complex I subunit 1 family. As to quaternary structure, NDH-1 is composed of 14 different subunits. Subunits NuoA, H, J, K, L, M, N constitute the membrane sector of the complex.

It localises to the cell inner membrane. The enzyme catalyses a quinone + NADH + 5 H(+)(in) = a quinol + NAD(+) + 4 H(+)(out). Its function is as follows. NDH-1 shuttles electrons from NADH, via FMN and iron-sulfur (Fe-S) centers, to quinones in the respiratory chain. The immediate electron acceptor for the enzyme in this species is believed to be ubiquinone. Couples the redox reaction to proton translocation (for every two electrons transferred, four hydrogen ions are translocated across the cytoplasmic membrane), and thus conserves the redox energy in a proton gradient. This subunit may bind ubiquinone. This is NADH-quinone oxidoreductase subunit H from Bartonella henselae (strain ATCC 49882 / DSM 28221 / CCUG 30454 / Houston 1) (Rochalimaea henselae).